Consider the following 710-residue polypeptide: Polyribonucleotide nucleotidyltransferase (710 aa).

2 residues coordinate Mg(2+): D489 and D495. Residues 556 to 615 form the KH domain; it reads PKIDTIKIDVDKIKVVIGKGGETIDKIIAETGVKIDIDDEGNVSIYSSDQAAIDRTKEII. The region spanning 625-693 is the S1 motif domain; the sequence is GEVYHAKVVR…EKGRVDASMK (69 aa). The segment at 691–710 is disordered; sequence SMKALIPRPPKPEKKEEKHD. Residues 700-710 are compositionally biased toward basic and acidic residues; the sequence is PKPEKKEEKHD.

This sequence belongs to the polyribonucleotide nucleotidyltransferase family. The cofactor is Mg(2+).

The protein resides in the cytoplasm. It catalyses the reaction RNA(n+1) + phosphate = RNA(n) + a ribonucleoside 5'-diphosphate. Involved in mRNA degradation. Catalyzes the phosphorolysis of single-stranded polyribonucleotides processively in the 3'- to 5'-direction. The polypeptide is Polyribonucleotide nucleotidyltransferase (Streptococcus pyogenes serotype M1).